Reading from the N-terminus, the 197-residue chain is Carbohydrate-binding domain-containing protein C2E1P3.05c (197 aa).

An N-terminal signal peptide occupies residues methionine 1–alanine 23. 2 consecutive CBM1 domains span residues glutamine 25–isoleucine 61 and proline 68–isoleucine 104. 4 disulfide bridges follow: cysteine 33/cysteine 50, cysteine 44/cysteine 60, cysteine 76/cysteine 93, and cysteine 87/cysteine 103. The tract at residues serine 115–threonine 163 is disordered. N-linked (GlcNAc...) asparagine glycosylation is found at asparagine 182 and asparagine 193.

The protein resides in the secreted. This chain is Carbohydrate-binding domain-containing protein C2E1P3.05c, found in Schizosaccharomyces pombe (strain 972 / ATCC 24843) (Fission yeast).